The following is a 59-amino-acid chain: Potassium channel toxin alpha-KTx 4.7 (59 aa).

A signal peptide spans 1–22 (MKAFYGILIIFILISMLDLSQQ). 3 disulfides stabilise this stretch: Cys29–Cys50, Cys35–Cys55, and Cys39–Cys57. An interaction with Ca(2+)-activated K(+) channels region spans residues 48 to 55 (GKCMNGKC).

This sequence belongs to the short scorpion toxin superfamily. Potassium channel inhibitor family. Alpha-KTx 04 subfamily. In terms of tissue distribution, expressed by the venom gland.

The protein resides in the secreted. Its function is as follows. Potently blocks Kv1.1/KCNA1 (85%), Kv1.2/KCNA2 (91%), Kv1.3/KCNA3 (89%), Kv1.6/KCNA6 (94%), and Shaker (97%). This Tityus stigmurus (Brazilian scorpion) protein is Potassium channel toxin alpha-KTx 4.7.